The sequence spans 274 residues: uncharacterized protein (274 aa).

This is an uncharacterized protein from Invertebrate iridescent virus 6 (IIV-6).